Reading from the N-terminus, the 160-residue chain is 2-C-methyl-D-erythritol 2,4-cyclodiphosphate synthase (160 aa).

A divalent metal cation contacts are provided by D10 and H12. 4-CDP-2-C-methyl-D-erythritol 2-phosphate contacts are provided by residues 10–12 and 36–37; these read DVH and HS. H44 lines the a divalent metal cation pocket. 4-CDP-2-C-methyl-D-erythritol 2-phosphate contacts are provided by residues 58–60, 63–67, 102–108, 134–137, F141, and R144; these read DIG, FPDTD, AQAPKML, and TTTE.

The protein belongs to the IspF family. Homotrimer. It depends on a divalent metal cation as a cofactor.

The catalysed reaction is 4-CDP-2-C-methyl-D-erythritol 2-phosphate = 2-C-methyl-D-erythritol 2,4-cyclic diphosphate + CMP. It participates in isoprenoid biosynthesis; isopentenyl diphosphate biosynthesis via DXP pathway; isopentenyl diphosphate from 1-deoxy-D-xylulose 5-phosphate: step 4/6. Functionally, involved in the biosynthesis of isopentenyl diphosphate (IPP) and dimethylallyl diphosphate (DMAPP), two major building blocks of isoprenoid compounds. Catalyzes the conversion of 4-diphosphocytidyl-2-C-methyl-D-erythritol 2-phosphate (CDP-ME2P) to 2-C-methyl-D-erythritol 2,4-cyclodiphosphate (ME-CPP) with a corresponding release of cytidine 5-monophosphate (CMP). This chain is 2-C-methyl-D-erythritol 2,4-cyclodiphosphate synthase, found in Shewanella amazonensis (strain ATCC BAA-1098 / SB2B).